We begin with the raw amino-acid sequence, 841 residues long: DNA ligase (841 aa).

NAD(+) is bound by residues 33 to 37 (DAQYD), 82 to 83 (SL), and Glu114. The active-site N6-AMP-lysine intermediate is the Lys116. Residues Arg137, Glu174, Lys300, and Lys324 each contribute to the NAD(+) site. Cys418, Cys421, Cys436, and Cys442 together coordinate Zn(2+). Residues 758–841 (EKTGPLDGQT…AFLGEHGQQR (84 aa)) enclose the BRCT domain.

This sequence belongs to the NAD-dependent DNA ligase family. LigA subfamily. Mg(2+) is required as a cofactor. Requires Mn(2+) as cofactor.

It carries out the reaction NAD(+) + (deoxyribonucleotide)n-3'-hydroxyl + 5'-phospho-(deoxyribonucleotide)m = (deoxyribonucleotide)n+m + AMP + beta-nicotinamide D-nucleotide.. Its function is as follows. DNA ligase that catalyzes the formation of phosphodiester linkages between 5'-phosphoryl and 3'-hydroxyl groups in double-stranded DNA using NAD as a coenzyme and as the energy source for the reaction. It is essential for DNA replication and repair of damaged DNA. The chain is DNA ligase from Xanthomonas oryzae pv. oryzae (strain MAFF 311018).